The sequence spans 446 residues: N-succinylarginine dihydrolase (446 aa).

Substrate contacts are provided by residues 19–28 (AGLSFGNVAS), N110, and 137–138 (HR). The active site involves E174. R213 serves as a coordination point for substrate. Residue H249 is part of the active site. Substrate-binding residues include D251 and N364. C370 acts as the Nucleophile in catalysis.

The protein belongs to the succinylarginine dihydrolase family. In terms of assembly, homodimer.

The catalysed reaction is N(2)-succinyl-L-arginine + 2 H2O + 2 H(+) = N(2)-succinyl-L-ornithine + 2 NH4(+) + CO2. Its pathway is amino-acid degradation; L-arginine degradation via AST pathway; L-glutamate and succinate from L-arginine: step 2/5. In terms of biological role, catalyzes the hydrolysis of N(2)-succinylarginine into N(2)-succinylornithine, ammonia and CO(2). The chain is N-succinylarginine dihydrolase from Burkholderia thailandensis (strain ATCC 700388 / DSM 13276 / CCUG 48851 / CIP 106301 / E264).